A 386-amino-acid chain; its full sequence is Diels-Alderase phm7 (386 aa).

Positions 1 to 223 (MSEPTSSSSL…MVRGWSARPW (223 aa)) are beta-sandwich motif. Positions 51, 84, and 356 each coordinate substrate. Residues 223 to 386 (WPTFMNDAYY…FGGQLQIPVP (164 aa)) are beta-barrel motif.

The protein belongs to the Diels-Alderase family.

It functions in the pathway secondary metabolite biosynthesis. With respect to regulation, 3-aminomethyl-p-menthane which is similar to the phomasetin substructure, dose-dependently inhibits phm7 activity in vitro and production of phomasetin in the fungus. Its function is as follows. Diels-Alderase; part of the gene cluster that mediates the biosynthesis of the trans-fused decalin-containing tetramic acid phomasetin, the stereochemical opposite of the HIV-1 integrase inhibitor equisetin. The PKS module of phm1 together with the enoylreductase phm4 catalyze the formation of the polyketide unit which is then conjugated to L-serine by the condensation domain of the phm1 NRPS module. Activity of the Dieckmann cyclase domain (RED) of phm1 results in release of the Dieckmann product intermediate. The Diels-Alderase phm7 then uses the Dieckmann product of phm1 as substrate and catalyzes the Diels-Alder cycloaddition to form the decalin ring of N-desmethylphomasetin. N-desmethylphomasetin is further methylated to phomasetin by the methyltransferase phm5. In Pyrenochaetopsis sp, this protein is Diels-Alderase phm7.